We begin with the raw amino-acid sequence, 606 residues long: Polypeptide N-acetylgalactosaminyltransferase 9 (606 aa).

Topologically, residues 1-6 (MAVARK) are cytoplasmic. A helical; Signal-anchor for type II membrane protein transmembrane segment spans residues 7–29 (IRTLLTVNILVFVGIVLFSVYCR). At 30–606 (LQGRSQELVR…IRNWIKHARH (577 aa)) the chain is on the lumenal side. Residues 43–62 (GGCRPRPATPAPGSPLRSGG) form a disordered region. Cystine bridges form between Cys144–Cys375 and Cys366–Cys445. Positions 153–264 (LPQVSVVFIF…TGWAEPALSR (112 aa)) are catalytic subdomain A. The substrate site is built by Asp194 and Arg225. Mn(2+) is bound by residues Asp248, His250, and His380. The tract at residues 321-383 (PIRTPAMIGC…PCSRVAHIER (63 aa)) is catalytic subdomain B. Substrate contacts are provided by Arg383 and Tyr388. Asn463 carries an N-linked (GlcNAc...) asparagine glycan. The region spanning 467–603 (TYGEVRNSKA…KWMIRNWIKH (137 aa)) is the Ricin B-type lectin domain. Intrachain disulfides connect Cys480/Cys496, Cys528/Cys543, and Cys570/Cys590.

It belongs to the glycosyltransferase 2 family. GalNAc-T subfamily. Mn(2+) is required as a cofactor.

It is found in the golgi apparatus membrane. The catalysed reaction is L-seryl-[protein] + UDP-N-acetyl-alpha-D-galactosamine = a 3-O-[N-acetyl-alpha-D-galactosaminyl]-L-seryl-[protein] + UDP + H(+). It carries out the reaction L-threonyl-[protein] + UDP-N-acetyl-alpha-D-galactosamine = a 3-O-[N-acetyl-alpha-D-galactosaminyl]-L-threonyl-[protein] + UDP + H(+). The protein operates within protein modification; protein glycosylation. In terms of biological role, catalyzes the initial reaction in O-linked oligosaccharide biosynthesis, the transfer of an N-acetyl-D-galactosamine residue to a serine or threonine residue on the protein receptor. Does not glycosylate apomucin or SDC3. The polypeptide is Polypeptide N-acetylgalactosaminyltransferase 9 (GALNT9) (Macaca fascicularis (Crab-eating macaque)).